Consider the following 328-residue polypeptide: MIEKIWSGESPLWRLLLPLSWLYGLVSGAIRLCYKLKLKRAWRAPVPVVVVGNLTAGGNGKTPVVVWLVEQLQQRGIRVGVVSRGYGGKAESYPLLLSADTTTAQAGDEPVLIYQRTDAPVAVSPVRSDAVKAILAQHPDVQIIVTDDGLQHYRLARDVEIVVIDGVRRFGNGWWLPAGPMRERAGRLKSVDAVIVNGGVPRSGEIPMHLLPGQAVNLRIGTRCDVAQLEHVVAMAGIGHPPRFFATLKMCGVQPEKCVPLADHQSLNHADVSALVSAGQTLVMTEKDAVKCRAFAEENWWYLPVDAQLSGDEPAKLLTQLTSLASGN.

55–62 (TAGGNGKT) serves as a coordination point for ATP.

It belongs to the LpxK family.

It carries out the reaction a lipid A disaccharide + ATP = a lipid IVA + ADP + H(+). The protein operates within glycolipid biosynthesis; lipid IV(A) biosynthesis; lipid IV(A) from (3R)-3-hydroxytetradecanoyl-[acyl-carrier-protein] and UDP-N-acetyl-alpha-D-glucosamine: step 6/6. In terms of biological role, transfers the gamma-phosphate of ATP to the 4'-position of a tetraacyldisaccharide 1-phosphate intermediate (termed DS-1-P) to form tetraacyldisaccharide 1,4'-bis-phosphate (lipid IVA). The sequence is that of Tetraacyldisaccharide 4'-kinase from Shigella flexneri serotype 5b (strain 8401).